The chain runs to 311 residues: Malate dehydrogenase (311 aa).

NAD(+) contacts are provided by residues 7-13 (GAAGGIG) and Asp-34. Residues Arg-81 and Arg-87 each coordinate substrate. Residues Asn-94 and 117–119 (ITN) contribute to the NAD(+) site. Residues Asn-119 and Arg-153 each contribute to the substrate site. His-177 serves as the catalytic Proton acceptor. Met-227 serves as a coordination point for NAD(+).

It belongs to the LDH/MDH superfamily. MDH type 1 family. In terms of assembly, homodimer.

It catalyses the reaction (S)-malate + NAD(+) = oxaloacetate + NADH + H(+). Catalyzes the reversible oxidation of malate to oxaloacetate. The polypeptide is Malate dehydrogenase (Haemophilus influenzae (strain PittGG)).